The chain runs to 42 residues: Cytochrome b559 subunit beta (42 aa).

Residues 17 to 33 (WLTIHALAVPTVFFLGA) traverse the membrane as a helical segment. Residue His-21 coordinates heme.

The protein belongs to the PsbE/PsbF family. Heterodimer of an alpha subunit and a beta subunit. PSII is composed of 1 copy each of membrane proteins PsbA, PsbB, PsbC, PsbD, PsbE, PsbF, PsbH, PsbI, PsbJ, PsbK, PsbL, PsbM, PsbT, PsbX, PsbY, PsbZ, Psb30/Ycf12, at least 3 peripheral proteins of the oxygen-evolving complex and a large number of cofactors. It forms dimeric complexes. Heme b serves as cofactor.

The protein resides in the plastid. It localises to the chloroplast thylakoid membrane. This b-type cytochrome is tightly associated with the reaction center of photosystem II (PSII). PSII is a light-driven water:plastoquinone oxidoreductase that uses light energy to abstract electrons from H(2)O, generating O(2) and a proton gradient subsequently used for ATP formation. It consists of a core antenna complex that captures photons, and an electron transfer chain that converts photonic excitation into a charge separation. In Emiliania huxleyi (Coccolithophore), this protein is Cytochrome b559 subunit beta.